Here is a 344-residue protein sequence, read N- to C-terminus: tRNA N6-adenosine threonylcarbamoyltransferase (344 aa).

Fe cation-binding residues include H111 and H115. Residues 133-137, D166, G179, and N283 contribute to the substrate site; that span reads LVSGG. A Fe cation-binding site is contributed by D311.

It belongs to the KAE1 / TsaD family. Requires Fe(2+) as cofactor.

The protein resides in the cytoplasm. It carries out the reaction L-threonylcarbamoyladenylate + adenosine(37) in tRNA = N(6)-L-threonylcarbamoyladenosine(37) in tRNA + AMP + H(+). Required for the formation of a threonylcarbamoyl group on adenosine at position 37 (t(6)A37) in tRNAs that read codons beginning with adenine. Is involved in the transfer of the threonylcarbamoyl moiety of threonylcarbamoyl-AMP (TC-AMP) to the N6 group of A37, together with TsaE and TsaB. TsaD likely plays a direct catalytic role in this reaction. The protein is tRNA N6-adenosine threonylcarbamoyltransferase of Orientia tsutsugamushi (strain Ikeda) (Rickettsia tsutsugamushi).